The chain runs to 413 residues: Transmembrane protein 237B (413 aa).

A disordered region spans residues 1–162; that stretch reads MDPEAKVSSS…EDDDVITDPQ (162 aa). Residues 112–122 are compositionally biased toward polar residues; it reads DLVSNGDTLDQ. The next 4 membrane-spanning stretches (helical) occupy residues 233 to 253, 274 to 294, 312 to 332, and 360 to 380; these read VIGLFSHGFLAGYAVWNIIVV, LAYPAQSLLYLLLALSTVSAF, LSPVALASVFYFSALVLSLSQ, and ILYPWITVNLVVSLLVGLAWI.

This sequence belongs to the TMEM237 family.

It is found in the membrane. The protein resides in the cell projection. It localises to the cilium. In terms of biological role, component of the transition zone in primary cilia. Required for ciliogenesis. This Danio rerio (Zebrafish) protein is Transmembrane protein 237B (tmem237b).